The sequence spans 30 residues: Basic phospholipase A2 CM-I (30 aa).

Belongs to the phospholipase A2 family. Group I subfamily. Ca(2+) is required as a cofactor. In terms of tissue distribution, expressed by the venom gland.

The protein resides in the secreted. It catalyses the reaction a 1,2-diacyl-sn-glycero-3-phosphocholine + H2O = a 1-acyl-sn-glycero-3-phosphocholine + a fatty acid + H(+). In terms of biological role, snake venom phospholipase A2 (PLA2) that shows weak anticoagulant activity. Is more catalytically active than the strong anticoagulant protein CM-IV found in this venom. Acts by inhibiting the complex composed of tissue factor (F3) and coagulation factor VIIa (F7) (TF-VIIa complex) by only enzymatic mechanism. PLA2 catalyzes the calcium-dependent hydrolysis of the 2-acyl groups in 3-sn-phosphoglycerides. The polypeptide is Basic phospholipase A2 CM-I (Naja nigricollis (Black-necked spitting cobra)).